Consider the following 180-residue polypeptide: Adipocyte-related X-chromosome expressed sequence 1 (180 aa).

The Cytoplasmic segment spans residues 1 to 11; sequence MNSLLSRANSL. The helical; Signal-anchor for type II membrane protein transmembrane segment at 12-32 threads the bilayer; the sequence is FAFTLSVMAALTLGCILTTAF. Topologically, residues 33-180 are lumenal; it reads KDRSAPVRLH…PDSYEIATTF (148 aa). Residue Asn-141 is glycosylated (N-linked (GlcNAc...) asparagine).

It belongs to the SPCS3 family. In terms of tissue distribution, strongly expressed in epididymal white and brown adipose tissue with low levels in heart.

The protein resides in the endoplasmic reticulum membrane. Functionally, plays a role in adipogenesis. The chain is Adipocyte-related X-chromosome expressed sequence 1 from Mus musculus (Mouse).